The sequence spans 346 residues: GTPase Obg (346 aa).

The 159-residue stretch at 1-159 (MRFVDRCRLK…RELRLELKVL (159 aa)) folds into the Obg domain. The segment at 122 to 147 (KGGRGNLHFKSPHDRAPRRAEPGEPG) is disordered. The span at 132-147 (SPHDRAPRRAEPGEPG) shows a compositional bias: basic and acidic residues. The OBG-type G domain maps to 160 to 336 (ADVGLLGFPN…LVRELAALAR (177 aa)). GTP-binding positions include 166 to 173 (GFPNAGKS), 191 to 195 (FTTLT), 218 to 221 (DIPG), 288 to 291 (TKAD), and 317 to 319 (SAA). Positions 173 and 193 each coordinate Mg(2+).

This sequence belongs to the TRAFAC class OBG-HflX-like GTPase superfamily. OBG GTPase family. Monomer. The cofactor is Mg(2+).

It localises to the cytoplasm. An essential GTPase which binds GTP, GDP and possibly (p)ppGpp with moderate affinity, with high nucleotide exchange rates and a fairly low GTP hydrolysis rate. Plays a role in control of the cell cycle, stress response, ribosome biogenesis and in those bacteria that undergo differentiation, in morphogenesis control. The chain is GTPase Obg from Sorangium cellulosum (strain So ce56) (Polyangium cellulosum (strain So ce56)).